Here is a 215-residue protein sequence, read N- to C-terminus: Leucyl/phenylalanyl-tRNA--protein transferase (215 aa).

This sequence belongs to the L/F-transferase family.

It is found in the cytoplasm. The catalysed reaction is N-terminal L-lysyl-[protein] + L-leucyl-tRNA(Leu) = N-terminal L-leucyl-L-lysyl-[protein] + tRNA(Leu) + H(+). The enzyme catalyses N-terminal L-arginyl-[protein] + L-leucyl-tRNA(Leu) = N-terminal L-leucyl-L-arginyl-[protein] + tRNA(Leu) + H(+). It catalyses the reaction L-phenylalanyl-tRNA(Phe) + an N-terminal L-alpha-aminoacyl-[protein] = an N-terminal L-phenylalanyl-L-alpha-aminoacyl-[protein] + tRNA(Phe). In terms of biological role, functions in the N-end rule pathway of protein degradation where it conjugates Leu, Phe and, less efficiently, Met from aminoacyl-tRNAs to the N-termini of proteins containing an N-terminal arginine or lysine. This Campylobacter jejuni (strain RM1221) protein is Leucyl/phenylalanyl-tRNA--protein transferase.